A 590-amino-acid chain; its full sequence is Ankyrin repeat-containing protein ITN1 (590 aa).

The tract at residues 25–44 (ENQNPMIDPSPTPSPSATAT) is disordered. 7 ANK repeats span residues 73 to 102 (HNDTELHLAAQRGDLAAVQQILKDINSQME), 128 to 157 (LGETALFTAADKGHLDVVKELLKYSSRESI), 163 to 192 (SGYDPLHIAAIQGHHAIVEVLLDHDATLSQ), 197 to 226 (SNATPLVSAAMRGHTEVVNQLLSKAGNLLE), 231 to 260 (NNKNALHLAARQGHVEVIKALLSKDPQLAR), 265 to 294 (KGQTALHMAVKGQSSEVVKLLLDADPAIVM), and 299 to 329 (SCNTALHVATRKKRAEIVELLLSLPDTNANT). The next 4 membrane-spanning stretches (helical) occupy residues 422-442 (VTVVAVLFATVAFAAIFTVPG), 460-480 (IFFIFNALALFTSLAVVVVQI), 500-520 (LMWLASMCTSVAFLASSYIVV), and 531-551 (VTVVGGVIMAGVLGTMTYYVV).

As to quaternary structure, interacts with REM19/RTV1. As to expression, expressed in roots, shoots, leaf vasculature and stems.

It localises to the cell membrane. In terms of biological role, involved in salt stress tolerance. May act through abscisic acid (ABA) signaling pathways and promote reactive oxygen species (ROS) production. In Arabidopsis thaliana (Mouse-ear cress), this protein is Ankyrin repeat-containing protein ITN1.